The following is a 294-amino-acid chain: Factor associated with metabolism and energy (294 aa).

A compositionally biased stretch (basic residues) spans 1–12 (MGLGHSKAHPRV). Disordered regions lie at residues 1–28 (MGLG…TPST) and 255–279 (FWDS…LVRT). G2 carries the N-myristoyl glycine lipid modification. Residues 17 to 28 (PLQSQETETPST) show a composition bias toward polar residues. Residues 268–279 (KDERRPQALVRT) are compositionally biased toward basic and acidic residues.

As to expression, expressed in proximal tubules of the kidney.

The protein localises to the cell membrane. Its subcellular location is the cytoplasmic vesicle. Its function is as follows. May be involved in tuning the metabolism, energy expenditure, and excretion processes. The polypeptide is Factor associated with metabolism and energy (Mus musculus (Mouse)).